The chain runs to 226 residues: Putative DNA repair protein recA homolog 4 (226 aa).

ATP is bound at residue 41 to 48 (GPEASGKT).

It belongs to the RecA family.

The protein resides in the cytoplasm. Involved in recombination ability and DNA strand transfer activity. In Arabidopsis thaliana (Mouse-ear cress), this protein is Putative DNA repair protein recA homolog 4.